The sequence spans 414 residues: Enolase (414 aa).

Residue Q162 participates in (2R)-2-phosphoglycerate binding. The active-site Proton donor is E204. Positions 239, 280, and 307 each coordinate Mg(2+). Positions 332, 361, 362, and 383 each coordinate (2R)-2-phosphoglycerate. K332 functions as the Proton acceptor in the catalytic mechanism.

The protein belongs to the enolase family. The cofactor is Mg(2+).

It localises to the cytoplasm. The protein localises to the secreted. The protein resides in the cell surface. The catalysed reaction is (2R)-2-phosphoglycerate = phosphoenolpyruvate + H2O. The protein operates within carbohydrate degradation; glycolysis; pyruvate from D-glyceraldehyde 3-phosphate: step 4/5. Functionally, catalyzes the reversible conversion of 2-phosphoglycerate (2-PG) into phosphoenolpyruvate (PEP). It is essential for the degradation of carbohydrates via glycolysis. In Campylobacter lari (strain RM2100 / D67 / ATCC BAA-1060), this protein is Enolase.